The chain runs to 350 residues: Biotin synthase (350 aa).

In terms of domain architecture, Radical SAM core spans 38–256 (NHVQVSTLLS…IAVARIMMPE (219 aa)). 3 residues coordinate [4Fe-4S] cluster: Cys-53, Cys-57, and Cys-60. Cys-97, Cys-128, Cys-188, and Arg-260 together coordinate [2Fe-2S] cluster.

The protein belongs to the radical SAM superfamily. Biotin synthase family. As to quaternary structure, homodimer. Requires [4Fe-4S] cluster as cofactor. The cofactor is [2Fe-2S] cluster.

The catalysed reaction is (4R,5S)-dethiobiotin + (sulfur carrier)-SH + 2 reduced [2Fe-2S]-[ferredoxin] + 2 S-adenosyl-L-methionine = (sulfur carrier)-H + biotin + 2 5'-deoxyadenosine + 2 L-methionine + 2 oxidized [2Fe-2S]-[ferredoxin]. The protein operates within cofactor biosynthesis; biotin biosynthesis; biotin from 7,8-diaminononanoate: step 2/2. Its function is as follows. Catalyzes the conversion of dethiobiotin (DTB) to biotin by the insertion of a sulfur atom into dethiobiotin via a radical-based mechanism. The sequence is that of Biotin synthase from Aliivibrio fischeri (strain ATCC 700601 / ES114) (Vibrio fischeri).